The primary structure comprises 218 residues: Outer-membrane lipoprotein LolB (218 aa).

A signal peptide spans 1–20; sequence MSQVIRTLALTGLALAGLSG. Cys21 carries N-palmitoyl cysteine lipidation. The S-diacylglycerol cysteine moiety is linked to residue Cys21.

This sequence belongs to the LolB family. Monomer.

The protein localises to the cell outer membrane. Functionally, plays a critical role in the incorporation of lipoproteins in the outer membrane after they are released by the LolA protein. This chain is Outer-membrane lipoprotein LolB, found in Xanthomonas campestris pv. campestris (strain 8004).